Reading from the N-terminus, the 194-residue chain is Protein GrpE (194 aa).

A disordered region spans residues 1 to 39 (MTNHEQDQQDNSELLDDDQVTLESQQAADSGAEAPASDD). The span at 8–20 (QQDNSELLDDDQV) shows a compositional bias: acidic residues.

The protein belongs to the GrpE family. As to quaternary structure, homodimer.

The protein localises to the cytoplasm. In terms of biological role, participates actively in the response to hyperosmotic and heat shock by preventing the aggregation of stress-denatured proteins, in association with DnaK and GrpE. It is the nucleotide exchange factor for DnaK and may function as a thermosensor. Unfolded proteins bind initially to DnaJ; upon interaction with the DnaJ-bound protein, DnaK hydrolyzes its bound ATP, resulting in the formation of a stable complex. GrpE releases ADP from DnaK; ATP binding to DnaK triggers the release of the substrate protein, thus completing the reaction cycle. Several rounds of ATP-dependent interactions between DnaJ, DnaK and GrpE are required for fully efficient folding. The protein is Protein GrpE of Saccharophagus degradans (strain 2-40 / ATCC 43961 / DSM 17024).